A 102-amino-acid polypeptide reads, in one-letter code: Matrix Gla protein (102 aa).

Residues Ser-2, Ser-3, and Ser-5 each carry the phosphoserine modification. Positions 18–45 (DANSFMRQPRPPNHWDSRDRFKSPRERT) are disordered. The region spanning 27-73 (RPPNHWDSRDRFKSPRERTREKCEEYRPCERLARQVGLKRAYGKYFG) is the Gla domain. Residues 30–45 (NHWDSRDRFKSPRERT) show a composition bias toward basic and acidic residues. 4-carboxyglutamate occurs at positions 43, 47, 50, and 51. The cysteines at positions 49 and 55 are disulfide-linked. The disordered stretch occupies residues 72-102 (FGNRRQRPSTSGRLRPRKYRASRYRNHHYRY). Positions 85-102 (LRPRKYRASRYRNHHYRY) are enriched in basic residues.

It belongs to the osteocalcin/matrix Gla protein family. Post-translationally, requires vitamin K-dependent gamma-carboxylation for its function. In terms of tissue distribution, accounts for 35-40% of the total protein in the acid demineralization extract of calcified cartilage.

It localises to the secreted. Associates with the organic matrix of calcified cartilage. The polypeptide is Matrix Gla protein (mgp) (Galeorhinus galeus (Tope shark)).